A 137-amino-acid chain; its full sequence is UPF0275 protein PM0489 (137 aa).

Belongs to the UPF0275 family.

This Pasteurella multocida (strain Pm70) protein is UPF0275 protein PM0489.